Consider the following 273-residue polypeptide: Proteasome subunit alpha (273 aa).

Residues 231–273 (DDGAAGQPPSSSDTDTSAAEARKPTASAGSADLEGPEPERPDS) form a disordered region. Positions 238–249 (PPSSSDTDTSAA) are enriched in low complexity.

This sequence belongs to the peptidase T1A family. The 20S proteasome core is composed of 14 alpha and 14 beta subunits that assemble into four stacked heptameric rings, resulting in a barrel-shaped structure. The two inner rings, each composed of seven catalytic beta subunits, are sandwiched by two outer rings, each composed of seven alpha subunits. The catalytic chamber with the active sites is on the inside of the barrel. Has a gated structure, the ends of the cylinder being occluded by the N-termini of the alpha-subunits. Is capped by the proteasome-associated ATPase, ARC.

It is found in the cytoplasm. Its pathway is protein degradation; proteasomal Pup-dependent pathway. Its activity is regulated as follows. The formation of the proteasomal ATPase ARC-20S proteasome complex, likely via the docking of the C-termini of ARC into the intersubunit pockets in the alpha-rings, may trigger opening of the gate for substrate entry. Interconversion between the open-gate and close-gate conformations leads to a dynamic regulation of the 20S proteasome proteolysis activity. Functionally, component of the proteasome core, a large protease complex with broad specificity involved in protein degradation. This is Proteasome subunit alpha from Salinispora arenicola (strain CNS-205).